Here is an 847-residue protein sequence, read N- to C-terminus: Leucine--tRNA ligase (847 aa).

The 'HIGH' region motif lies at 41–51 (PYPSGRIHMGH). A 'KMSKS' region motif is present at residues 619–623 (KMSKS). Residue K622 coordinates ATP.

It belongs to the class-I aminoacyl-tRNA synthetase family.

The protein resides in the cytoplasm. The enzyme catalyses tRNA(Leu) + L-leucine + ATP = L-leucyl-tRNA(Leu) + AMP + diphosphate. The sequence is that of Leucine--tRNA ligase from Cereibacter sphaeroides (strain ATCC 17023 / DSM 158 / JCM 6121 / CCUG 31486 / LMG 2827 / NBRC 12203 / NCIMB 8253 / ATH 2.4.1.) (Rhodobacter sphaeroides).